A 371-amino-acid chain; its full sequence is Peptide chain release factor 2 (371 aa).

Glutamine 247 is subject to N5-methylglutamine.

This sequence belongs to the prokaryotic/mitochondrial release factor family. Post-translationally, methylated by PrmC. Methylation increases the termination efficiency of RF2.

The protein localises to the cytoplasm. Functionally, peptide chain release factor 2 directs the termination of translation in response to the peptide chain termination codons UGA and UAA. This is Peptide chain release factor 2 from Caulobacter vibrioides (strain ATCC 19089 / CIP 103742 / CB 15) (Caulobacter crescentus).